The sequence spans 744 residues: Probable ubiquitin carboxyl-terminal hydrolase MINDY-4 (744 aa).

A phosphoserine mark is found at serine 143, serine 220, and serine 224. Residues 211 to 358 (GMMAGPVASS…QLVSDRTDDK (148 aa)) form a disordered region. Residues 265–277 (VPDSSSDSVSRSP) show a composition bias toward low complexity. Residues 290-299 (NVTSSSQGLS) are compositionally biased toward polar residues. Serine 295 carries the post-translational modification Phosphoserine. Residues 300 to 310 (QRDRPRLRSVS) show a composition bias toward basic and acidic residues. Cysteine 443 acts as the Nucleophile in catalysis. Histidine 664 acts as the Proton acceptor in catalysis.

The protein belongs to the MINDY deubiquitinase family. FAM188 subfamily.

The enzyme catalyses Thiol-dependent hydrolysis of ester, thioester, amide, peptide and isopeptide bonds formed by the C-terminal Gly of ubiquitin (a 76-residue protein attached to proteins as an intracellular targeting signal).. Functionally, probable hydrolase that can remove 'Lys-48'-linked conjugated ubiquitin from proteins. The protein is Probable ubiquitin carboxyl-terminal hydrolase MINDY-4 (Mindy4) of Mus musculus (Mouse).